The sequence spans 322 residues: MTHLNAFSSVEHSTVLLHETVDGLALKENGIYIDGTFGRGGHSRLILSKLSANGKLIAIDRDPKAVAEAQKIQDPRFQIEHNTFSEILSICEKRGLVGKIDGILLDLGVSSPQLDDAARGFSFMKDGPLDMRMDDSKGISAAEWLQQVSEQDLAWVLKTFGEERFAKKIAKAIVNYNKSAVQNGSEFLTRTLQLAELIAHTVPFKDKHKHPATRSFQAIRIFINAELDELEKVLQSALTVLAPAGRLSVISFHSLEDRMVKHFMRKQSQGREIPKGLPLREDQIQRNQTLKVIGKAIMPTDAEIAQNPRARSAVLRVAERLN.

Residues 40-42 (GGH), D60, F84, D106, and Q113 each bind S-adenosyl-L-methionine.

It belongs to the methyltransferase superfamily. RsmH family.

The protein localises to the cytoplasm. It carries out the reaction cytidine(1402) in 16S rRNA + S-adenosyl-L-methionine = N(4)-methylcytidine(1402) in 16S rRNA + S-adenosyl-L-homocysteine + H(+). Its function is as follows. Specifically methylates the N4 position of cytidine in position 1402 (C1402) of 16S rRNA. The sequence is that of Ribosomal RNA small subunit methyltransferase H from Aggregatibacter aphrophilus (strain NJ8700) (Haemophilus aphrophilus).